The primary structure comprises 143 residues: Large ribosomal subunit protein uL15 (143 aa).

The segment at 1–56 (MQLNSIKPAAGAKHAKRRVGRGIGSGLGKTAGRGHKGQKSRAGGYHKVGFEGGQMP) is disordered. Positions 21 to 31 (RGIGSGLGKTA) are enriched in gly residues.

This sequence belongs to the universal ribosomal protein uL15 family. In terms of assembly, part of the 50S ribosomal subunit.

Binds to the 23S rRNA. The chain is Large ribosomal subunit protein uL15 from Verminephrobacter eiseniae (strain EF01-2).